Reading from the N-terminus, the 118-residue chain is Holo-[acyl-carrier-protein] synthase (118 aa).

2 residues coordinate Mg(2+): Asp-9 and Glu-52.

Belongs to the P-Pant transferase superfamily. AcpS family. Requires Mg(2+) as cofactor.

The protein localises to the cytoplasm. It catalyses the reaction apo-[ACP] + CoA = holo-[ACP] + adenosine 3',5'-bisphosphate + H(+). In terms of biological role, transfers the 4'-phosphopantetheine moiety from coenzyme A to a Ser of acyl-carrier-protein. The polypeptide is Holo-[acyl-carrier-protein] synthase (Frankia alni (strain DSM 45986 / CECT 9034 / ACN14a)).